The chain runs to 84 residues: Large ribosomal subunit protein bL27 (84 aa).

The protein belongs to the bacterial ribosomal protein bL27 family.

The polypeptide is Large ribosomal subunit protein bL27 (Salinispora tropica (strain ATCC BAA-916 / DSM 44818 / JCM 13857 / NBRC 105044 / CNB-440)).